A 70-amino-acid polypeptide reads, in one-letter code: Dermaseptin-PH (70 aa).

Positions 1 to 22 (MDILKKSLFLILFLGVVSLSIC) are cleaved as a signal peptide. Residues 23 to 44 (EEEKRENEEEMEQDDEQSEMKR) constitute a propeptide that is removed on maturation. Glutamine 67 carries the glutamine amide modification. Positions 68–70 (GGQ) are excised as a propeptide.

The protein belongs to the frog skin active peptide (FSAP) family. In terms of tissue distribution, expressed by the skin glands.

It is found in the secreted. The protein resides in the target cell membrane. Antimicrobial peptide which inhibits the growth of Gram-negative (MIC=16-64 uM) and Gram-positive bacteria (MIC=32 uM), and pathogenic yeast Candida albicans (MIC=16 uM). Shows a broad-spectrum of anticancer activities against several cancer cell lines. Also shows slight cytotoxicity on human dermal microvascular endothelium cells (IC(50)=4.85 uM). Induces low hemolysis against horse erythrocytes. The protein is Dermaseptin-PH of Pithecopus hypochondrialis (Orange-legged leaf frog).